Reading from the N-terminus, the 392-residue chain is MRTLRRNVTENRLTISRRRTEKKTSPNKTEKSVQIPVDIIIEILLRLPAKSIATCRCVSKLWISVICRQDFTELFLTRSLHRPQLLFCCKKDGNLFFFSSPQLQNPYENSSAISLKNFSLCYKISRPVNGLICFKRKEMNETVTVICNPSTGHTLSLPKPMKTSIGPSRFFVYEPIQKQFKVLLSYKSDEHQVLTLGTGELSWRIIECSMPHILGMSEICINGVLYYPAINLSSGDYIIVCFDVRSEKFRFITVMEEFIKAAHDGTLINYNGKLASLVSERYCFVDGRSKSIELWVLQDAEKKEWSKHTYVLPAWWQHRIGTLNLRFVGVTRTNEIMLSPCYQTVPFDVYYFNIERKTMMSVAIQGMEAFQGHLVFTYLDHVENVKLLHNMF.

The F-box domain maps to 29–78 (TEKSVQIPVDIIIEILLRLPAKSIATCRCVSKLWISVICRQDFTELFLTR).

This Arabidopsis thaliana (Mouse-ear cress) protein is F-box protein At5g65850.